The chain runs to 160 residues: Transcription elongation factor GreA (160 aa).

Belongs to the GreA/GreB family.

Functionally, necessary for efficient RNA polymerase transcription elongation past template-encoded arresting sites. The arresting sites in DNA have the property of trapping a certain fraction of elongating RNA polymerases that pass through, resulting in locked ternary complexes. Cleavage of the nascent transcript by cleavage factors such as GreA or GreB allows the resumption of elongation from the new 3'terminus. GreA releases sequences of 2 to 3 nucleotides. The sequence is that of Transcription elongation factor GreA from Francisella tularensis subsp. tularensis (strain FSC 198).